The chain runs to 617 residues: Sodium-dependent noradrenaline transporter (617 aa).

A disordered region spans residues 1–23 (MLLARMNPQVQPENNGADTGPEQ). Over 1 to 62 (MLLARMNPQV…AQPRETWGKK (62 aa)) the chain is Cytoplasmic. A compositionally biased stretch (polar residues) spans 8-17 (PQVQPENNGA). Residues 63–88 (IDFLLSVVGFAVDLANVWRFPYLCYK) traverse the membrane as a helical segment. The Na(+) site is built by Gly-71, Ala-73, and Val-74. Asp-75 is a (R)-noradrenaline binding site. Asp-75 contributes to the dopamine binding site. A Na(+)-binding site is contributed by Asn-78. Residues Tyr-87 and Lys-88 each coordinate (R)-noradrenaline. Residues 89–92 (NGGG) are Extracellular-facing. Residues 93 to 116 (AFLIPYTLFLIIAGMPLFYMELAL) form a helical membrane-spanning segment. Residues 117-135 (GQYNREGAATVWKICPFFK) are Cytoplasmic-facing. A helical transmembrane segment spans residues 136-166 (GVGYAVILIALYVGFYYNVIIAWSLYYLFSS). Residues Ala-145 and Gly-149 each coordinate (R)-noradrenaline. Ala-145 provides a ligand contact to dopamine. At 167-233 (FTLNLPWTDC…SSGIHDIGLP (67 aa)) the chain is on the extracellular side. A disulfide bond links Cys-176 and Cys-185. 3 N-linked (GlcNAc...) asparagine glycosylation sites follow: Asn-184, Asn-192, and Asn-198. The helical transmembrane segment at 234–254 (QWQLLLCLMVVVIVLYFSLWK) threads the bilayer. At 255 to 257 (GVK) the chain is on the cytoplasmic side. Residues 258 to 282 (TSGKVVWITATLPYFVLFVLLVHGV) form a helical membrane-spanning segment. At 283–306 (TLPGASNGINAYLHIDFYRLKEAT) the chain is on the extracellular side. A helical transmembrane segment spans residues 307 to 332 (VWIDAATQIFFSLGAGFGVLIAFASY). Position 317 (Phe-317) interacts with (R)-noradrenaline. Phe-317 is a binding site for dopamine. Ser-318 lines the Na(+) pocket. Over 333 to 338 (NKFDNN) the chain is Cytoplasmic. A helical transmembrane segment spans residues 339 to 362 (CYRDALLTSSINCITSFVSGFAIF). Asn-350 is a Na(+) binding site. Topologically, residues 363-402 (SILGYMAHEHKVNIEDVATEGAGLVFILYPEAISTLSGST) are extracellular. Glu-382 lines the (R)-noradrenaline pocket. Glu-382 is a binding site for dopamine. Residues 403–428 (FWAVVFFVMLLALGLDSSMGGMEAVI) form a helical membrane-spanning segment. Asp-418 and Ser-419 together coordinate Na(+). Topologically, residues 429-443 (TGLADDFQVLKRHRK) are cytoplasmic. Residues 444–464 (LFTFGVTFSTFLLALFCITKG) form a helical membrane-spanning segment. A topological domain (extracellular) is located at residue Gly-465. A helical transmembrane segment spans residues 466–492 (IYVLTLLDTFAAGTSILFAVLMEAIGV). Over 493–522 (SWFYGVDRFSNDIQQMMGFRPGLYWRLCWK) the chain is Cytoplasmic. Residues 523–545 (FVSPAFLLFVVVVSIINFKPLTY) traverse the membrane as a helical segment. Residues 546–548 (DDY) are Extracellular-facing. Residues 549-569 (IFPPWANWVGWGIALSSMVLV) traverse the membrane as a helical segment. Over 570 to 617 (PIYVIYKFLSTQGSLWERLAYGITPENEHHLVAQRDIRQFQLQHWLAI) the chain is Cytoplasmic.

Belongs to the sodium:neurotransmitter symporter (SNF) (TC 2.A.22) family. SLC6A2 subfamily. Monomer. Can form homodimers in the cell membrane; homodimerization is mostly mediated by cholesterol and lipids, and regulates neurotransmitter transport activity. Interacts with PRKCABP. Post-translationally, palmitoylated; palmitoylation regulates protein levels and neurotransmitter transport.

It is found in the cell membrane. It localises to the cell projection. The protein localises to the axon. Its subcellular location is the synapse. The protein resides in the synaptosome. The enzyme catalyses (R)-noradrenaline(out) + chloride(out) + Na(+)(out) = (R)-noradrenaline(in) + chloride(in) + Na(+)(in). It carries out the reaction dopamine(out) + chloride(out) + Na(+)(out) = dopamine(in) + chloride(in) + Na(+)(in). The catalysed reaction is dopamine(out) + chloride(out) + 2 Na(+)(out) = dopamine(in) + chloride(in) + 2 Na(+)(in). Inhibited by mazindol, desipramine, nomifensine and nortriptyline. Its function is as follows. Mediates sodium- and chloride-dependent transport of norepinephrine (also known as noradrenaline), the primary signaling neurotransmitter in the autonomic sympathetic nervous system. Is responsible for norepinephrine re-uptake and clearance from the synaptic cleft, thus playing a crucial role in norepinephrine inactivation and homeostasis. Can also mediate sodium- and chloride-dependent transport of dopamine. The chain is Sodium-dependent noradrenaline transporter from Homo sapiens (Human).